The following is a 782-amino-acid chain: E3 ubiquitin-protein ligase SopA (782 aa).

Residues 137–171 are disordered; sequence VSVSANNRPTVSEGRTPPVSPSLSLQATSSPSSPA. The segment covering 157-171 has biased composition (low complexity); sequence PSLSLQATSSPSSPA. The active-site Glycyl thioester intermediate is Cys-753.

Belongs to the SopA E3 ligase family. Post-translationally, ubiquitinated in the presence of host E1 ubiquitin-activating enzyme, E2 ubiquitin-conjugating enzyme and ubiquitin.

Its subcellular location is the secreted. It localises to the host mitochondrion. The enzyme catalyses S-ubiquitinyl-[E2 ubiquitin-conjugating enzyme]-L-cysteine + [acceptor protein]-L-lysine = [E2 ubiquitin-conjugating enzyme]-L-cysteine + N(6)-ubiquitinyl-[acceptor protein]-L-lysine.. Effector proteins function to alter host cell physiology and promote bacterial survival in host tissues. This protein is an E3 ubiquitin ligase that interferes with host's ubiquitination pathway. Required for inducing polymorphonuclear leukocytes migration across the intestinal epithelium. The sequence is that of E3 ubiquitin-protein ligase SopA (sopA) from Salmonella dublin.